Reading from the N-terminus, the 240-residue chain is Biosynthetic peptidoglycan transglycosylase (240 aa).

A helical transmembrane segment spans residues 12–31 (ALLWFAGGSVLLVLVFRFVP).

This sequence belongs to the glycosyltransferase 51 family.

It is found in the cell inner membrane. The enzyme catalyses [GlcNAc-(1-&gt;4)-Mur2Ac(oyl-L-Ala-gamma-D-Glu-L-Lys-D-Ala-D-Ala)](n)-di-trans,octa-cis-undecaprenyl diphosphate + beta-D-GlcNAc-(1-&gt;4)-Mur2Ac(oyl-L-Ala-gamma-D-Glu-L-Lys-D-Ala-D-Ala)-di-trans,octa-cis-undecaprenyl diphosphate = [GlcNAc-(1-&gt;4)-Mur2Ac(oyl-L-Ala-gamma-D-Glu-L-Lys-D-Ala-D-Ala)](n+1)-di-trans,octa-cis-undecaprenyl diphosphate + di-trans,octa-cis-undecaprenyl diphosphate + H(+). Its pathway is cell wall biogenesis; peptidoglycan biosynthesis. Peptidoglycan polymerase that catalyzes glycan chain elongation from lipid-linked precursors. The sequence is that of Biosynthetic peptidoglycan transglycosylase from Pseudomonas fluorescens (strain Pf0-1).